Consider the following 302-residue polypeptide: Pseudouridine-5'-phosphate glycosidase (302 aa).

E25 functions as the Proton donor in the catalytic mechanism. 2 residues coordinate substrate: K86 and V106. Residue D138 participates in Mn(2+) binding. A substrate-binding site is contributed by 140 to 142; it reads SAD. The active-site Nucleophile is K159.

This sequence belongs to the pseudouridine-5'-phosphate glycosidase family. Homotrimer. The cofactor is Mn(2+).

It carries out the reaction D-ribose 5-phosphate + uracil = psi-UMP + H2O. Functionally, catalyzes the reversible cleavage of pseudouridine 5'-phosphate (PsiMP) to ribose 5-phosphate and uracil. Functions biologically in the cleavage direction, as part of a pseudouridine degradation pathway. The protein is Pseudouridine-5'-phosphate glycosidase of Jannaschia sp. (strain CCS1).